We begin with the raw amino-acid sequence, 277 residues long: MGLLECCARCLVGAPFASLVATGLCFFGVALFCGCGHEALTGTEKLIETYFSKNYQDYEYLINVIHAFQYVIYGTASFFFLYGALLLAEGFYTTGAVRQIFGDYKTTICGKGLSATVTGGQKGRGSRGQHQAHSLERVCHCLGKWLGHPDKFVGITYALTVVWLLVFACSAVPVYIYFNTWTTCQSIAFPSKTSASIGSLCADARMYGVLPWNAFPGKVCGSNLLSICKTAEFQMTFHLFIAAFVGAAATLVSLLTFMIAATYNFAVLKLMGRGTKF.

The Cytoplasmic portion of the chain corresponds to 2–9 (GLLECCAR). Residues cysteine 6, cysteine 7, and cysteine 10 are each lipidated (S-palmitoyl cysteine). The helical transmembrane segment at 10 to 36 (CLVGAPFASLVATGLCFFGVALFCGCG) threads the bilayer. The Extracellular portion of the chain corresponds to 37 to 63 (HEALTGTEKLIETYFSKNYQDYEYLIN). Residues 64 to 88 (VIHAFQYVIYGTASFFFLYGALLLA) traverse the membrane as a helical segment. At 89 to 151 (EGFYTTGAVR…LGKWLGHPDK (63 aa)) the chain is on the cytoplasmic side. Cysteine 109 carries S-palmitoyl cysteine lipidation. At serine 114 the chain carries Phosphoserine. Residues threonine 116 and threonine 118 each carry the phosphothreonine modification. Residues cysteine 139 and cysteine 141 are each lipidated (S-palmitoyl cysteine). The helical transmembrane segment at 152–177 (FVGITYALTVVWLLVFACSAVPVYIY) threads the bilayer. Residues 178–233 (FNTWTTCQSIAFPSKTSASIGSLCADARMYGVLPWNAFPGKVCGSNLLSICKTAEF) lie on the Extracellular side of the membrane. Cystine bridges form between cysteine 184/cysteine 228 and cysteine 201/cysteine 220. Residue serine 199 is the site of O-palmitoyl serine attachment. Residues 234 to 260 (QMTFHLFIAAFVGAAATLVSLLTFMIA) traverse the membrane as a helical segment. Over 261 to 277 (ATYNFAVLKLMGRGTKF) the chain is Cytoplasmic.

The protein belongs to the myelin proteolipid protein family. Interacts with MAL.

Its subcellular location is the cell membrane. The protein resides in the myelin membrane. Its function is as follows. This is the major myelin protein from the central nervous system. It plays an important role in the formation or maintenance of the multilamellar structure of myelin. The protein is Myelin proteolipid protein (Plp1) of Mus musculus (Mouse).